The chain runs to 523 residues: 2-isopropylmalate synthase (523 aa).

A Pyruvate carboxyltransferase domain is found at 5–267; that stretch reads VIIFDTTLRD…ETGINAKEIH (263 aa). Mn(2+)-binding residues include Asp-14, His-202, His-204, and Asn-238. The regulatory domain stretch occupies residues 392–523; that stretch reads GLQQLVVHSD…KQARTELGGV (132 aa).

This sequence belongs to the alpha-IPM synthase/homocitrate synthase family. LeuA type 1 subfamily. As to quaternary structure, homodimer. Mn(2+) is required as a cofactor.

Its subcellular location is the cytoplasm. The enzyme catalyses 3-methyl-2-oxobutanoate + acetyl-CoA + H2O = (2S)-2-isopropylmalate + CoA + H(+). Its pathway is amino-acid biosynthesis; L-leucine biosynthesis; L-leucine from 3-methyl-2-oxobutanoate: step 1/4. Its function is as follows. Catalyzes the condensation of the acetyl group of acetyl-CoA with 3-methyl-2-oxobutanoate (2-ketoisovalerate) to form 3-carboxy-3-hydroxy-4-methylpentanoate (2-isopropylmalate). This Shewanella loihica (strain ATCC BAA-1088 / PV-4) protein is 2-isopropylmalate synthase.